The sequence spans 80 residues: Translation initiation factor IF-1, chloroplastic (80 aa).

The S1-like domain maps to 1–72 (MKKQNLIDME…TKGRIIYRLR (72 aa)).

It belongs to the IF-1 family. As to quaternary structure, component of the 30S ribosomal translation pre-initiation complex which assembles on the 30S ribosome in the order IF-2 and IF-3, IF-1 and N-formylmethionyl-tRNA(fMet); mRNA recruitment can occur at any time during PIC assembly.

Its subcellular location is the plastid. The protein resides in the chloroplast. Functionally, one of the essential components for the initiation of protein synthesis. Stabilizes the binding of IF-2 and IF-3 on the 30S subunit to which N-formylmethionyl-tRNA(fMet) subsequently binds. Helps modulate mRNA selection, yielding the 30S pre-initiation complex (PIC). Upon addition of the 50S ribosomal subunit IF-1, IF-2 and IF-3 are released leaving the mature 70S translation initiation complex. This chain is Translation initiation factor IF-1, chloroplastic, found in Adiantum capillus-veneris (Maidenhair fern).